The following is a 235-amino-acid chain: Phosphoribosylaminoimidazole-succinocarboxamide synthase (235 aa).

The protein belongs to the SAICAR synthetase family.

It catalyses the reaction 5-amino-1-(5-phospho-D-ribosyl)imidazole-4-carboxylate + L-aspartate + ATP = (2S)-2-[5-amino-1-(5-phospho-beta-D-ribosyl)imidazole-4-carboxamido]succinate + ADP + phosphate + 2 H(+). Its pathway is purine metabolism; IMP biosynthesis via de novo pathway; 5-amino-1-(5-phospho-D-ribosyl)imidazole-4-carboxamide from 5-amino-1-(5-phospho-D-ribosyl)imidazole-4-carboxylate: step 1/2. The chain is Phosphoribosylaminoimidazole-succinocarboxamide synthase from Clostridium botulinum (strain Alaska E43 / Type E3).